The chain runs to 438 residues: Transposon Ty2-B Gag polyprotein (438 aa).

3 stretches are compositionally biased toward polar residues: residues 1–11 (MESQQLHQNPH), 19–39 (ASVT…SASN), and 49–60 (KVNSQQETTPGT). 3 disordered regions span residues 1 to 88 (MESQ…YQQH), 364 to 397 (KNVS…AKAH), and 419 to 438 (SSQY…TERI). Residues 295–397 (ENNINVSDRL…SSKPRAAKAH (103 aa)) form an RNA-binding region. Positions 369-381 (TSPNTTNTKVTTR) are enriched in low complexity.

As to quaternary structure, homotrimer.

It localises to the cytoplasm. Capsid protein (CA) is the structural component of the virus-like particle (VLP), forming the shell that encapsulates the retrotransposons dimeric RNA genome. The particles are assembled from trimer-clustered units and there are holes in the capsid shells that allow for the diffusion of macromolecules. CA also has nucleocapsid-like chaperone activity, promoting primer tRNA(i)-Met annealing to the multipartite primer-binding site (PBS), dimerization of Ty2 RNA and initiation of reverse transcription. The polypeptide is Transposon Ty2-B Gag polyprotein (TY2A-B) (Saccharomyces cerevisiae (strain ATCC 204508 / S288c) (Baker's yeast)).